The chain runs to 440 residues: 3-phosphoshikimate 1-carboxyvinyltransferase (440 aa).

The 3-phosphoshikimate site is built by Lys-31, Ser-32, and Arg-36. A phosphoenolpyruvate-binding site is contributed by Lys-31. The phosphoenolpyruvate site is built by Gly-104 and Arg-133. 3-phosphoshikimate contacts are provided by Ser-178, Gln-180, Asp-328, and Lys-355. Position 180 (Gln-180) interacts with phosphoenolpyruvate. The active-site Proton acceptor is Asp-328. Arg-359 and Arg-401 together coordinate phosphoenolpyruvate.

It belongs to the EPSP synthase family. In terms of assembly, monomer.

Its subcellular location is the cytoplasm. The catalysed reaction is 3-phosphoshikimate + phosphoenolpyruvate = 5-O-(1-carboxyvinyl)-3-phosphoshikimate + phosphate. The protein operates within metabolic intermediate biosynthesis; chorismate biosynthesis; chorismate from D-erythrose 4-phosphate and phosphoenolpyruvate: step 6/7. Catalyzes the transfer of the enolpyruvyl moiety of phosphoenolpyruvate (PEP) to the 5-hydroxyl of shikimate-3-phosphate (S3P) to produce enolpyruvyl shikimate-3-phosphate and inorganic phosphate. The protein is 3-phosphoshikimate 1-carboxyvinyltransferase of Thermosynechococcus vestitus (strain NIES-2133 / IAM M-273 / BP-1).